Consider the following 317-residue polypeptide: Ribosomal protein L11 methyltransferase (317 aa).

The S-adenosyl-L-methionine site is built by threonine 169, glycine 190, aspartate 211, and asparagine 256.

It belongs to the methyltransferase superfamily. PrmA family.

It is found in the cytoplasm. It carries out the reaction L-lysyl-[protein] + 3 S-adenosyl-L-methionine = N(6),N(6),N(6)-trimethyl-L-lysyl-[protein] + 3 S-adenosyl-L-homocysteine + 3 H(+). Functionally, methylates ribosomal protein L11. This Helicobacter hepaticus (strain ATCC 51449 / 3B1) protein is Ribosomal protein L11 methyltransferase.